We begin with the raw amino-acid sequence, 304 residues long: DCN1-like protein 3 (304 aa).

2 disordered regions span residues 1-87 (MGQC…EESS) and 285-304 (VEGRGALSSGPEGLCPEEQT). Gly-2 is lipidated: N-myristoyl glycine. The DCUN1 domain occupies 86-278 (SSLQRLEELF…LFDTFVEWEM (193 aa)).

Part of a complex containing DCUN1D3, CUL3 and RBX1. Interacts (via the DCUN1 domain) with the unneddylated cullins: interacts with CUL1, CUL2, CUL3, CUL4A, CUL4B and CUL5; these interactions promote the cullin neddylation and the identity of the cullin dictates the affinity of the interaction. Interacts preferentially with CUL3; this interaction triggers the relocalization of CUL3 to the cell membrane where CUL3 is neddylated. Interacts (via DCUN1 domain) with RBX1. May also interact with regulators or subunits of cullin-RING ligases such as RNF7, ELOB and DDB1; these interactions are bridged by cullins. Interacts (via DCUN1 domain) with CAND1; this interaction is bridged by cullins and strongly inhibits cullin neddylation. These CAND-cullin-DCNL complexes can only be neddylated in the presence of a substrate adapter. Interacts (via DCUN1 domain) with the N-terminally acetylated form of UBE2M and UBE2F.

The protein localises to the cell membrane. Its subcellular location is the cytoplasm. The protein resides in the nucleus. It is found in the perinuclear region. Functionally, contributes to the neddylation of all cullins by transferring NEDD8 from N-terminally acetylated NEDD8-conjugating E2s enzyme to different cullin C-terminal domain-RBX complexes and may play a role in the cell cycle progression by regulating the SCF ubiquitin E3 ligase complex, after UV damage. At the cell membrane, can promote and as well inhibit cullins neddylation. The polypeptide is DCN1-like protein 3 (Rattus norvegicus (Rat)).